We begin with the raw amino-acid sequence, 114 residues long: UPF0342 protein OEOE_0901 (114 aa).

This sequence belongs to the UPF0342 family.

The chain is UPF0342 protein OEOE_0901 from Oenococcus oeni (strain ATCC BAA-331 / PSU-1).